The sequence spans 639 residues: Sec1 family domain-containing protein 1 (639 aa).

Residues serine 34, serine 300, and serine 525 each carry the phosphoserine modification.

This sequence belongs to the STXBP/unc-18/SEC1 family. As to quaternary structure, interacts with STX17. Interacts with STX5A. Interacts with the COG complex via COG4.

Its subcellular location is the cytoplasm. It localises to the endoplasmic reticulum membrane. The protein localises to the golgi apparatus. It is found in the golgi stack membrane. Its function is as follows. Plays a role in SNARE-pin assembly and Golgi-to-ER retrograde transport via its interaction with COG4. Involved in vesicular transport between the endoplasmic reticulum and the Golgi. The polypeptide is Sec1 family domain-containing protein 1 (Scfd1) (Mus musculus (Mouse)).